Reading from the N-terminus, the 206-residue chain is MELKLLQDNGQLGAGVAASPEVFGRDYNEALVHQVVVAYQANARSGNRKQKDREEVKHTTKKPWRQKGTGRARAGMSSSPLWRGGGRIFPNSPEENFSQKVNKKMYRAGMRSIYSQLAREGRINVVDSLSVDAPKTKLLADKFRAMGLDSVLVITDNLDENLFLASRNLAHVLVVEPRHADPLSLVHYKKVLVTKAAVAQIEELLK.

The interval 43–78 (ARSGNRKQKDREEVKHTTKKPWRQKGTGRARAGMSS) is disordered. Residues 49 to 58 (KQKDREEVKH) show a composition bias toward basic and acidic residues. The segment covering 59–70 (TTKKPWRQKGTG) has biased composition (basic residues).

Belongs to the universal ribosomal protein uL4 family. As to quaternary structure, part of the 50S ribosomal subunit.

Functionally, one of the primary rRNA binding proteins, this protein initially binds near the 5'-end of the 23S rRNA. It is important during the early stages of 50S assembly. It makes multiple contacts with different domains of the 23S rRNA in the assembled 50S subunit and ribosome. In terms of biological role, forms part of the polypeptide exit tunnel. In Ralstonia pickettii (strain 12J), this protein is Large ribosomal subunit protein uL4.